The following is a 225-amino-acid chain: NAD(P)H-quinone oxidoreductase subunit K, chloroplastic (225 aa).

[4Fe-4S] cluster contacts are provided by Cys-43, Cys-44, Cys-108, and Cys-139.

This sequence belongs to the complex I 20 kDa subunit family. As to quaternary structure, NDH is composed of at least 16 different subunits, 5 of which are encoded in the nucleus. [4Fe-4S] cluster serves as cofactor.

The protein resides in the plastid. It localises to the chloroplast thylakoid membrane. It catalyses the reaction a plastoquinone + NADH + (n+1) H(+)(in) = a plastoquinol + NAD(+) + n H(+)(out). The enzyme catalyses a plastoquinone + NADPH + (n+1) H(+)(in) = a plastoquinol + NADP(+) + n H(+)(out). Its function is as follows. NDH shuttles electrons from NAD(P)H:plastoquinone, via FMN and iron-sulfur (Fe-S) centers, to quinones in the photosynthetic chain and possibly in a chloroplast respiratory chain. The immediate electron acceptor for the enzyme in this species is believed to be plastoquinone. Couples the redox reaction to proton translocation, and thus conserves the redox energy in a proton gradient. The chain is NAD(P)H-quinone oxidoreductase subunit K, chloroplastic from Dioscorea elephantipes (Elephant's foot yam).